A 247-amino-acid chain; its full sequence is Mannose-specific lectin CML-2 (247 aa).

Residues aspartate 87 and glycine 107 each contribute to the a carbohydrate site. Residue asparagine 119 is glycosylated (N-linked (GlcNAc...) asparagine). Mn(2+)-binding residues include glutamate 129 and aspartate 131. Positions 131 and 133 each coordinate Ca(2+). 2 residues coordinate a carbohydrate: serine 138 and asparagine 139. Positions 139 and 142 each coordinate Ca(2+). Mn(2+)-binding residues include aspartate 142 and histidine 147. 3 residues coordinate a carbohydrate: glycine 221, glutamate 222, and glutamine 223.

It belongs to the leguminous lectin family. Homodimer; non-covalently linked. In terms of processing, glycosylated.

Mannose-specific lectin. Also binds alpha-methyl-D-mannoside, D-glucose, N-acetyl-D-glucosamine and sucrose but not D-galactose, D-arabinose, D-fructose, D-xylose, lactose or glycoproteins fetiun, PSM and ovalbumin. Shows agglutinating activity towards rabbit erythrocytes. This is Mannose-specific lectin CML-2 from Centrolobium microchaete (Canarywood tree).